The following is a 492-amino-acid chain: Peptidyl-prolyl cis-trans isomerase-like 4 (492 aa).

The 161-residue stretch at 1–161 (MAVLLETTLG…QDIRINHTVI (161 aa)) folds into the PPIase cyclophilin-type domain. The interval 167-188 (DDPPDLLIPDRSPEPTREQLDS) is disordered. Over residues 177–187 (RSPEPTREQLD) the composition is skewed to basic and acidic residues. At Ser-178 the chain carries Phosphoserine. Thr-182 carries the post-translational modification Phosphothreonine. Glycyl lysine isopeptide (Lys-Gly) (interchain with G-Cter in SUMO2) cross-links involve residues Lys-201, Lys-212, and Lys-218. The 79-residue stretch at 240–318 (NVLFVCKLNP…RRIHVDFSQS (79 aa)) folds into the RRM domain. Glycyl lysine isopeptide (Lys-Gly) (interchain with G-Cter in SUMO2) cross-links involve residues Lys-321 and Lys-362. Disordered regions lie at residues 368-406 (DEQAEDSKSSHSHTSKKHKKKTHHCSEEKEDEDYMPIKN) and 423-492 (EESC…SKYR). Residues 377–390 (SHSHTSKKHKKKTH) are compositionally biased toward basic residues. Ser-393 is subject to Phosphoserine. Residue Lys-405 forms a Glycyl lysine isopeptide (Lys-Gly) (interchain with G-Cter in SUMO2) linkage. The span at 426 to 452 (CWEKQKSEKRDRTQNRSRSRSRERDGH) shows a compositional bias: basic and acidic residues. Lys-460 participates in a covalent cross-link: Glycyl lysine isopeptide (Lys-Gly) (interchain with G-Cter in SUMO2). At Ser-471 the chain carries Phosphoserine. Positions 482 to 492 (KSKDKEKSKYR) are enriched in basic and acidic residues.

This sequence belongs to the cyclophilin-type PPIase family. PPIL4 subfamily. In terms of tissue distribution, abundantly expressed in kidney but has a ubiquitously low expression pattern in other adult tissues.

It localises to the nucleus. The enzyme catalyses [protein]-peptidylproline (omega=180) = [protein]-peptidylproline (omega=0). PPIases accelerate the folding of proteins. It catalyzes the cis-trans isomerization of proline imidic peptide bonds in oligopeptides. This Homo sapiens (Human) protein is Peptidyl-prolyl cis-trans isomerase-like 4 (PPIL4).